Consider the following 273-residue polypeptide: Protein BRANCHLESS TRICHOME (273 aa).

Residues 1–12 show a composition bias toward polar residues; the sequence is MKDMKMQSSPET. A disordered region spans residues 1–30; that stretch reads MKDMKMQSSPETMMTRIPTPDPHSTGVRED. Residues 69–199 are a coiled coil; it reads IKVFMESELG…GERERNRMMK (131 aa).

As to quaternary structure, interacts with STI.

Functionally, acts as a key regulator of trichome branching. Could participate with STI in the same pathway. Also plays a role in integrating endoreplication levels with cell shape. The protein is Protein BRANCHLESS TRICHOME (BLT) of Arabidopsis thaliana (Mouse-ear cress).